The sequence spans 620 residues: Probable serine/threonine-protein kinase RTK1 (620 aa).

Disordered regions lie at residues 1-20, 29-130, 153-186, 210-237, and 252-271; these read MVKETPLHSSSSTSLSSLFR, AKIF…PVRT, KDAFHHPHPVRSTAHSNISTVSSAKSDTPSSNLS, QASTPGSVELQHNSSSGSDDTSSRKKKS, and HDNHHHHHHHNRGSTPTKPK. The span at 7 to 18 shows a compositional bias: low complexity; that stretch reads LHSSSSTSLSSL. Over residues 56-76 the composition is skewed to basic and acidic residues; sequence KNTDSDQEDQIKYNKPNDRRS. Thr58 carries the post-translational modification Phosphothreonine. A Phosphoserine modification is found at Ser60. Composition is skewed to polar residues over residues 95-107, 165-186, and 210-222; these read VASSTLTGISPTS, TAHSNISTVSSAKSDTPSSNLS, and QASTPGSVELQHN. Position 216 is a phosphoserine (Ser216). Basic residues predominate over residues 254 to 263; sequence NHHHHHHHNR. Positions 302–575 constitute a Protein kinase domain; it reads GIPGRKLGEG…MNDVVKDDWL (274 aa). Residues 308–316 and Lys330 contribute to the ATP site; that span reads LGEGASGSV. Lys334 participates in a covalent cross-link: Glycyl lysine isopeptide (Lys-Gly) (interchain with G-Cter in ubiquitin). Asp430 serves as the catalytic Proton acceptor.

It belongs to the protein kinase superfamily. Ser/Thr protein kinase family. In terms of assembly, interacts with ribosome biogenesis factors ARC1, CKA2 and GUS1.

It carries out the reaction L-seryl-[protein] + ATP = O-phospho-L-seryl-[protein] + ADP + H(+). The enzyme catalyses L-threonyl-[protein] + ATP = O-phospho-L-threonyl-[protein] + ADP + H(+). Probable serine/threonine-protein kinase that may be involved in ribosome biogenesis. The sequence is that of Probable serine/threonine-protein kinase RTK1 (RTK1) from Saccharomyces cerevisiae (strain ATCC 204508 / S288c) (Baker's yeast).